Consider the following 131-residue polypeptide: Holo-[acyl-carrier-protein] synthase (131 aa).

Mg(2+)-binding residues include Asp8 and Glu57.

This sequence belongs to the P-Pant transferase superfamily. AcpS family. Mg(2+) is required as a cofactor.

It is found in the cytoplasm. It catalyses the reaction apo-[ACP] + CoA = holo-[ACP] + adenosine 3',5'-bisphosphate + H(+). Transfers the 4'-phosphopantetheine moiety from coenzyme A to a Ser of acyl-carrier-protein. The polypeptide is Holo-[acyl-carrier-protein] synthase (Desulforudis audaxviator (strain MP104C)).